The following is a 188-amino-acid chain: Elongation factor P (188 aa).

The protein belongs to the elongation factor P family.

It is found in the cytoplasm. Its pathway is protein biosynthesis; polypeptide chain elongation. Its function is as follows. Involved in peptide bond synthesis. Stimulates efficient translation and peptide-bond synthesis on native or reconstituted 70S ribosomes in vitro. Probably functions indirectly by altering the affinity of the ribosome for aminoacyl-tRNA, thus increasing their reactivity as acceptors for peptidyl transferase. This is Elongation factor P from Rhodopseudomonas palustris (strain TIE-1).